Consider the following 903-residue polypeptide: Envelope glycoprotein B (903 aa).

The signal sequence occupies residues M1 to A29. A compositionally biased stretch (low complexity) spans A30–A51. The tract at residues A30–A87 is disordered. Residues A30–P773 lie on the Virion surface side of the membrane. Pro residues predominate over residues T52–A61. N-linked (GlcNAc...) asparagine; by host glycans are attached at residues N86 and N140. Cystine bridges form between C115–C572, C132–C528, C206–C270, C363–C411, and C595–C632. 2 involved in fusion and/or binding to host membrane regions span residues V172–Y178 and R257–Y264. N397 and N429 each carry an N-linked (GlcNAc...) asparagine; by host glycan. The disordered stretch occupies residues R469–V491. Over residues P475 to G484 the composition is skewed to pro residues. An N-linked (GlcNAc...) asparagine; by host glycan is attached at N488. N673 carries an N-linked (GlcNAc...) asparagine; by host glycan. The interval I718 to S771 is hydrophobic membrane proximal region. The helical transmembrane segment at F774–F794 threads the bilayer. Topologically, residues R795–L903 are intravirion. The short motif at Y848–L851 is the Golgi targeting element. The segment at K882–L903 is disordered. Residues Y888 to V891 carry the Internalization motif motif.

It belongs to the herpesviridae glycoprotein B family. Homotrimer; disulfide-linked. Interacts with host receptor MYH9/NMMHC-IIA. Interacts with host receptor MYH10/NMMHC-IIB. Interacts with the host coreceptor PILRA. Binds to heparan sulfate proteoglycans. Interacts with gH/gL heterodimer. Interacts with gD. The cytoplasmic tail is phosphorylated by the viral kinase US3. Phosphorylation may be linked to a down-regulation of gB expression on cell surface. Post-translationally, ubiquitinated.

Its subcellular location is the virion membrane. The protein resides in the host cell membrane. It localises to the host endosome membrane. It is found in the host Golgi apparatus membrane. In terms of biological role, envelope glycoprotein that forms spikes at the surface of virion envelope and binds to the host cell entry receptors MYH9/NMMHC-IIA and MYH10/NMMHC-IIB, promoting the virus entry into host cells. Essential for the initial attachment to heparan sulfate moieties of the host cell surface proteoglycans. Involved in fusion of viral and cellular membranes leading to virus entry into the host cell: following initial binding to its host cell entry receptors, membrane fusion is mediated by the fusion machinery composed at least of gB and the heterodimer gH/gL. May be involved in the fusion between the virion envelope and the outer nuclear membrane during virion egress. Also plays a role, together with gK, in virus-induced cell-to-cell fusion (syncytia formation). This Homo sapiens (Human) protein is Envelope glycoprotein B.